We begin with the raw amino-acid sequence, 982 residues long: Bifunctional glutamine synthetase adenylyltransferase/adenylyl-removing enzyme (982 aa).

Residues 1-460 (MSLPSLANLP…HFRQVIADPD (460 aa)) are adenylyl removase. An adenylyl transferase region spans residues 473-982 (GAEWIPLWEE…IRIWRELRLG (510 aa)).

It belongs to the GlnE family. The cofactor is Mg(2+).

It carries out the reaction [glutamine synthetase]-O(4)-(5'-adenylyl)-L-tyrosine + phosphate = [glutamine synthetase]-L-tyrosine + ADP. The enzyme catalyses [glutamine synthetase]-L-tyrosine + ATP = [glutamine synthetase]-O(4)-(5'-adenylyl)-L-tyrosine + diphosphate. Involved in the regulation of glutamine synthetase GlnA, a key enzyme in the process to assimilate ammonia. When cellular nitrogen levels are high, the C-terminal adenylyl transferase (AT) inactivates GlnA by covalent transfer of an adenylyl group from ATP to specific tyrosine residue of GlnA, thus reducing its activity. Conversely, when nitrogen levels are low, the N-terminal adenylyl removase (AR) activates GlnA by removing the adenylyl group by phosphorolysis, increasing its activity. The regulatory region of GlnE binds the signal transduction protein PII (GlnB) which indicates the nitrogen status of the cell. This chain is Bifunctional glutamine synthetase adenylyltransferase/adenylyl-removing enzyme, found in Pseudomonas aeruginosa (strain ATCC 15692 / DSM 22644 / CIP 104116 / JCM 14847 / LMG 12228 / 1C / PRS 101 / PAO1).